The following is a 185-amino-acid chain: Ribosome-recycling factor (185 aa).

It belongs to the RRF family.

Its subcellular location is the cytoplasm. Its function is as follows. Responsible for the release of ribosomes from messenger RNA at the termination of protein biosynthesis. May increase the efficiency of translation by recycling ribosomes from one round of translation to another. This chain is Ribosome-recycling factor, found in Pseudarthrobacter chlorophenolicus (strain ATCC 700700 / DSM 12829 / CIP 107037 / JCM 12360 / KCTC 9906 / NCIMB 13794 / A6) (Arthrobacter chlorophenolicus).